Consider the following 352-residue polypeptide: DNA polymerase IV (352 aa).

Residues 4-185 enclose the UmuC domain; sequence IIHVDMDCFF…LPLSKIPGVG (182 aa). Residues D8 and D103 each coordinate Mg(2+). E104 is an active-site residue.

Belongs to the DNA polymerase type-Y family. Monomer. It depends on Mg(2+) as a cofactor.

Its subcellular location is the cytoplasm. It catalyses the reaction DNA(n) + a 2'-deoxyribonucleoside 5'-triphosphate = DNA(n+1) + diphosphate. Poorly processive, error-prone DNA polymerase involved in untargeted mutagenesis. Copies undamaged DNA at stalled replication forks, which arise in vivo from mismatched or misaligned primer ends. These misaligned primers can be extended by PolIV. Exhibits no 3'-5' exonuclease (proofreading) activity. May be involved in translesional synthesis, in conjunction with the beta clamp from PolIII. The chain is DNA polymerase IV from Enterobacter sp. (strain 638).